Reading from the N-terminus, the 236-residue chain is Small ribosomal subunit protein uS2c (236 aa).

Belongs to the universal ribosomal protein uS2 family.

It localises to the plastid. The polypeptide is Small ribosomal subunit protein uS2c (rps2) (Cuscuta gronovii (Common dodder)).